The chain runs to 456 residues: Enolase (456 aa).

A (2R)-2-phosphoglycerate-binding site is contributed by Gln177. Glu219 acts as the Proton donor in catalysis. Residues Asp256, Glu310, and Asp337 each coordinate Mg(2+). Lys362, Arg391, Ser392, and Lys413 together coordinate (2R)-2-phosphoglycerate. Lys362 (proton acceptor) is an active-site residue.

The protein belongs to the enolase family. Homodimer. It depends on Mg(2+) as a cofactor.

Its subcellular location is the cytoplasm. It is found in the secreted. It localises to the cell surface. The catalysed reaction is (2R)-2-phosphoglycerate = phosphoenolpyruvate + H2O. Its pathway is carbohydrate degradation; glycolysis; pyruvate from D-glyceraldehyde 3-phosphate: step 4/5. In terms of biological role, catalyzes the reversible conversion of 2-phosphoglycerate (2-PG) into phosphoenolpyruvate (PEP). It is essential for the degradation of carbohydrates via glycolysis. Its function is as follows. 'Moonlights' as a plasminogen receptor. Binds plasminogen, but no fibronectin binding was observed. Plasminogen binding increases bacterial adherence to host cells; plasmin activity leads to degradation of host extracellular matrix proteins, facilitating bacterial dissemination and disease spread. This Mycoplasma pneumoniae (strain ATCC 29342 / M129 / Subtype 1) (Mycoplasmoides pneumoniae) protein is Enolase.